Consider the following 905-residue polypeptide: Protein LONGIFOLIA 2 (905 aa).

Disordered stretches follow at residues 42–136, 232–268, 285–315, 432–585, 606–626, and 690–711; these read VSGG…GGLM, RLSL…RSSS, DTEQ…SRSV, STSP…SDSN, CDFP…IKQD, and VPFP…ECSP. Residues 65-74 are compositionally biased toward basic and acidic residues; sequence ESDKETERSS. Positions 90-117 are enriched in low complexity; sequence FESSSRPSFSSSPRSSSFSSAEVSTTAS. Residues 286 to 296 are compositionally biased toward basic and acidic residues; sequence TEQRRENRFCD. 3 stretches are compositionally biased toward polar residues: residues 432 to 461, 477 to 487, and 501 to 516; these read STSP…SGKQ, LDSTKSNSPKT, and MTKS…SPRT. The segment covering 566 to 581 has biased composition (basic and acidic residues); that stretch reads PDDRLSDARSDLRSLR.

In terms of assembly, interacts (via C-terminus) with TON1A and TON1B.

It is found in the cytoplasm. Its subcellular location is the cytoskeleton. Its function is as follows. In association with LNG1, regulates leaf morphology by promoting longitudinal polar cell elongation independently of ROT3. Associates with microtubules and recruits TON1A and TON1B to the cytoskeleton through its C-terminus. The protein is Protein LONGIFOLIA 2 (LNG2) of Arabidopsis thaliana (Mouse-ear cress).